The sequence spans 239 residues: Large ribosomal subunit protein uL1 (239 aa).

It belongs to the universal ribosomal protein uL1 family. As to quaternary structure, part of the 50S ribosomal subunit.

Binds directly to 23S rRNA. The L1 stalk is quite mobile in the ribosome, and is involved in E site tRNA release. Its function is as follows. Protein L1 is also a translational repressor protein, it controls the translation of the L11 operon by binding to its mRNA. This chain is Large ribosomal subunit protein uL1, found in Rhodococcus erythropolis (strain PR4 / NBRC 100887).